We begin with the raw amino-acid sequence, 122 residues long: Small ribosomal subunit protein uS13 (122 aa).

The tract at residues 95 to 122 (NLPVRGQRTHTNARTRKGKAKPIAGKKK) is disordered.

This sequence belongs to the universal ribosomal protein uS13 family. In terms of assembly, part of the 30S ribosomal subunit. Forms a loose heterodimer with protein S19. Forms two bridges to the 50S subunit in the 70S ribosome.

Functionally, located at the top of the head of the 30S subunit, it contacts several helices of the 16S rRNA. In the 70S ribosome it contacts the 23S rRNA (bridge B1a) and protein L5 of the 50S subunit (bridge B1b), connecting the 2 subunits; these bridges are implicated in subunit movement. Contacts the tRNAs in the A and P-sites. This Methylobacterium nodulans (strain LMG 21967 / CNCM I-2342 / ORS 2060) protein is Small ribosomal subunit protein uS13.